The chain runs to 260 residues: Carbonic anhydrase 3 (260 aa).

At alanine 2 the chain carries N-acetylalanine. The 257-residue stretch at 3-259 (KEWGYASHNG…VKGRVVRASF (257 aa)) folds into the Alpha-carbonic anhydrase domain. Serine 29, serine 43, serine 48, serine 50, and serine 55 each carry phosphoserine. The interval 64–67 (KTCR) is involved in proton transfer. Phosphothreonine is present on threonine 73. Histidine 94, histidine 96, and histidine 119 together coordinate Zn(2+). Tyrosine 127 is subject to Phosphotyrosine. Threonine 129 and threonine 176 each carry phosphothreonine. S-glutathionyl cysteine occurs at positions 182 and 187. 198–199 (TT) serves as a coordination point for substrate. Threonine 216 bears the Phosphothreonine mark. Serine 219 bears the Phosphoserine mark.

The protein belongs to the alpha-carbonic anhydrase family. Zn(2+) serves as cofactor. Post-translationally, S-thiolated both by thiol-disulfide exchange with glutathione disulfide and by oxyradical-initiated S-thiolation with reduced glutathione. In terms of processing, S-glutathionylated in hepatocytes under oxidative stress. In terms of tissue distribution, expressed at lower levels in adipose tissue from animals that were either genetically obese or had experimentally induced obesity.

It is found in the cytoplasm. The enzyme catalyses hydrogencarbonate + H(+) = CO2 + H2O. Its activity is regulated as follows. Inhibited by acetazolamide. Functionally, reversible hydration of carbon dioxide. In Mus musculus (Mouse), this protein is Carbonic anhydrase 3.